The chain runs to 178 residues: Protein GrpE (178 aa).

Positions 1–11 (MADELSEKSVE) are enriched in basic and acidic residues. A disordered region spans residues 1–32 (MADELSEKSVEGTEEDGESAPAEGTTEGVPVD).

The protein belongs to the GrpE family. Homodimer.

It is found in the cytoplasm. Participates actively in the response to hyperosmotic and heat shock by preventing the aggregation of stress-denatured proteins, in association with DnaK and GrpE. It is the nucleotide exchange factor for DnaK and may function as a thermosensor. Unfolded proteins bind initially to DnaJ; upon interaction with the DnaJ-bound protein, DnaK hydrolyzes its bound ATP, resulting in the formation of a stable complex. GrpE releases ADP from DnaK; ATP binding to DnaK triggers the release of the substrate protein, thus completing the reaction cycle. Several rounds of ATP-dependent interactions between DnaJ, DnaK and GrpE are required for fully efficient folding. The chain is Protein GrpE from Methanothrix thermoacetophila (strain DSM 6194 / JCM 14653 / NBRC 101360 / PT) (Methanosaeta thermophila).